A 468-amino-acid chain; its full sequence is Ribosomal lysine N-methyltransferase 4 (468 aa).

Positions 22 to 302 (EKIGLNDYRH…KGEQLWNTYG (281 aa)) constitute an SET domain. The tract at residues 188-225 (ISNENEKSAAETSIKEDKNGDAAKKNEGSANQDDEKLH) is disordered. S-adenosyl-L-methionine is bound at residue tyrosine 301.

The protein belongs to the class V-like SAM-binding methyltransferase superfamily. Histone-lysine methyltransferase family. SETD6 subfamily.

It localises to the nucleus. Functionally, S-adenosyl-L-methionine-dependent protein-lysine N-methyltransferase that monomethylates 60S ribosomal protein L42 (rpl42) at 'Lys-55'. The sequence is that of Ribosomal lysine N-methyltransferase 4 from Schizosaccharomyces pombe (strain 972 / ATCC 24843) (Fission yeast).